We begin with the raw amino-acid sequence, 197 residues long: Putative manganese efflux pump MntP (197 aa).

The next 6 membrane-spanning stretches (helical) occupy residues 8–28 (VILL…GLGA), 43–63 (VYAA…GYLL), 66–86 (VLLG…LIVL), 123–143 (LAIA…LLAL), 146–166 (WLAC…GIYL), and 177–197 (KAEI…MLFS).

Belongs to the MntP (TC 9.B.29) family.

It is found in the cell inner membrane. Functionally, probably functions as a manganese efflux pump. The protein is Putative manganese efflux pump MntP of Psychrobacter arcticus (strain DSM 17307 / VKM B-2377 / 273-4).